Consider the following 281-residue polypeptide: 3-methyl-2-oxobutanoate hydroxymethyltransferase (281 aa).

Mg(2+)-binding residues include Asp49 and Asp88. Residues 49 to 50, Asp88, and Lys118 contribute to the 3-methyl-2-oxobutanoate site; that span reads DS. Residue Glu120 participates in Mg(2+) binding. Glu186 acts as the Proton acceptor in catalysis.

This sequence belongs to the PanB family. Homodecamer; pentamer of dimers. Mg(2+) serves as cofactor.

Its subcellular location is the cytoplasm. It catalyses the reaction 3-methyl-2-oxobutanoate + (6R)-5,10-methylene-5,6,7,8-tetrahydrofolate + H2O = 2-dehydropantoate + (6S)-5,6,7,8-tetrahydrofolate. It participates in cofactor biosynthesis; (R)-pantothenate biosynthesis; (R)-pantoate from 3-methyl-2-oxobutanoate: step 1/2. Functionally, catalyzes the reversible reaction in which hydroxymethyl group from 5,10-methylenetetrahydrofolate is transferred onto alpha-ketoisovalerate to form ketopantoate. This is 3-methyl-2-oxobutanoate hydroxymethyltransferase from Chelativorans sp. (strain BNC1).